We begin with the raw amino-acid sequence, 501 residues long: Aldehyde dehydrogenase 1A1 (501 aa).

The residue at position 2 (S2) is an N-acetylserine. K91 and K128 each carry N6-acetyllysine. NAD(+)-binding positions include 167–170, 193–196, 226–227, and 246–247; these read LPWN, KPAE, GP, and GS. Position 252 is an N6-acetyllysine (K252). The active-site Proton acceptor is the E269. Residue 269–271 participates in NAD(+) binding; it reads ELG. The Nucleophile role is filled by C303. The interval 336–501 is mediates interaction with PRMT3; it reads LTPGVSQGPQ…VTVKISQKNS (166 aa). Phosphothreonine is present on T337. NAD(+) is bound at residue 349–353; that stretch reads EQYDK. N6-acetyllysine occurs at positions 353 and 367. Position 400-402 (400-402) interacts with NAD(+); sequence EIF. K410 is modified (N6-acetyllysine). At S413 the chain carries Phosphoserine. N6-acetyllysine occurs at positions 419, 435, and 495.

Belongs to the aldehyde dehydrogenase family. In terms of assembly, homotetramer. Interacts with PRMT3; the interaction is direct, inhibits ALDH1A1 aldehyde dehydrogenase activity and is independent of the methyltransferase activity of PRMT3. Post-translationally, the N-terminus is blocked most probably by acetylation.

The protein localises to the cytoplasm. The protein resides in the cytosol. It is found in the cell projection. Its subcellular location is the axon. The catalysed reaction is an aldehyde + NAD(+) + H2O = a carboxylate + NADH + 2 H(+). It carries out the reaction all-trans-retinal + NAD(+) + H2O = all-trans-retinoate + NADH + 2 H(+). It catalyses the reaction 9-cis-retinal + NAD(+) + H2O = 9-cis-retinoate + NADH + 2 H(+). The enzyme catalyses 11-cis-retinal + NAD(+) + H2O = 11-cis-retinoate + NADH + 2 H(+). The catalysed reaction is 13-cis-retinal + NAD(+) + H2O = 13-cis-retinoate + NADH + 2 H(+). It carries out the reaction 3-deoxyglucosone + NAD(+) + H2O = 2-dehydro-3-deoxy-D-gluconate + NADH + 2 H(+). It catalyses the reaction (E)-4-hydroxynon-2-enal + NAD(+) + H2O = (E)-4-hydroxynon-2-enoate + NADH + 2 H(+). The enzyme catalyses malonaldehyde + NAD(+) + H2O = 3-oxopropanoate + NADH + 2 H(+). The catalysed reaction is hexanal + NAD(+) + H2O = hexanoate + NADH + 2 H(+). It carries out the reaction propanal + NAD(+) + H2O = propanoate + NADH + 2 H(+). It catalyses the reaction acetaldehyde + NAD(+) + H2O = acetate + NADH + 2 H(+). The enzyme catalyses benzaldehyde + NAD(+) + H2O = benzoate + NADH + 2 H(+). The catalysed reaction is 4-aminobutanal + NAD(+) + H2O = 4-aminobutanoate + NADH + 2 H(+). It functions in the pathway cofactor metabolism; retinol metabolism. Its function is as follows. Cytosolic dehydrogenase that catalyzes the irreversible oxidation of a wide range of aldehydes to their corresponding carboxylic acid. Functions downstream of retinol dehydrogenases and catalyzes the oxidation of retinaldehyde into retinoic acid, the second step in the oxidation of retinol/vitamin A into retinoic acid. This pathway is crucial to control the levels of retinol and retinoic acid, two important molecules which excess can be teratogenic and cytotoxic. Also oxidizes aldehydes resulting from lipid peroxidation like (E)-4-hydroxynon-2-enal/HNE, malonaldehyde and hexanal that form protein adducts and are highly cytotoxic. By participating for instance to the clearance of (E)-4-hydroxynon-2-enal/HNE in the lens epithelium prevents the formation of HNE-protein adducts and lens opacification. Also functions downstream of fructosamine-3-kinase in the fructosamine degradation pathway by catalyzing the oxidation of 3-deoxyglucosone, the carbohydrate product of fructosamine 3-phosphate decomposition, which is itself a potent glycating agent that may react with lysine and arginine side-chains of proteins. Also has an aminobutyraldehyde dehydrogenase activity and is probably part of an alternative pathway for the biosynthesis of GABA/4-aminobutanoate in midbrain, thereby playing a role in GABAergic synaptic transmission. In Equus caballus (Horse), this protein is Aldehyde dehydrogenase 1A1.